A 701-amino-acid chain; its full sequence is MARKTPISLYRNIGISAHIDAGKTTTTERILFYTGLTHKLGEVHDGAATTDYMEQEQERGITITSAAVTSYWSGMAKQFPEHRFNIIDTPGHVDFTVEVERSMRVLDGAVMVYCAVGGVQPQSETVWRQANKYQVPRLAFVNKMDRQGANFFRVVEQMKTRLRANPVPIVIPVGAEDNFSGVVDLLKMKSIIWNEADKGTTFTYGDIPAELVETAEEWRQNMIEAAAEASEELMDKYLGGDELTEEEIVGALRQRTLAGEIQPMLCGSAFKNKGVQRMLDAVVELLPAPTDIPPVQGVNPNTEEADSRQASDEEKFSALAFKMLNDKYVGQLTFIRVYSGVVKSGDTVLNSVKGTRERIGRLVQMTAADRTEIEEVRAGDIAAAIGLKDVTTGETLCAESAPIILERMEFPEPVIHIAVEPKTKADQEKMGIALNRLAKEDPSFRVRTDEESGQTIISGMGELHLEIIVDRMKREFGVEANIGAPQVAYRETIRKAVKAEYKHAKQSGGKGQYGHVVIEMEPMEPGGEGYEFIDEIKGGVIPREFIPSVDKGIRDTLPNGIVAGYPVVDVRIRLVFGSYHDVDSSQLAFELAASQAFKEGMRQASPALLEPIMAVEVETPEEYMGDVMGDLNRRRGVVLGMDDDGIGGKKVRAEVPLAEMFGYSTDLRSATQGRATYSMEFKKYSEAPAHIAAAVTEARKG.

Residues 8–290 (SLYRNIGISA…AVVELLPAPT (283 aa)) enclose the tr-type G domain. Residues 17 to 24 (AHIDAGKT), 88 to 92 (DTPGH), and 142 to 145 (NKMD) contribute to the GTP site.

The protein belongs to the TRAFAC class translation factor GTPase superfamily. Classic translation factor GTPase family. EF-G/EF-2 subfamily.

It is found in the cytoplasm. In terms of biological role, catalyzes the GTP-dependent ribosomal translocation step during translation elongation. During this step, the ribosome changes from the pre-translocational (PRE) to the post-translocational (POST) state as the newly formed A-site-bound peptidyl-tRNA and P-site-bound deacylated tRNA move to the P and E sites, respectively. Catalyzes the coordinated movement of the two tRNA molecules, the mRNA and conformational changes in the ribosome. This chain is Elongation factor G, found in Neisseria meningitidis serogroup C (strain 053442).